The primary structure comprises 96 residues: Large ribosomal subunit protein eL14 (96 aa).

The protein belongs to the eukaryotic ribosomal protein eL14 family.

This Desulfurococcus amylolyticus (strain DSM 18924 / JCM 16383 / VKM B-2413 / 1221n) (Desulfurococcus kamchatkensis) protein is Large ribosomal subunit protein eL14.